Reading from the N-terminus, the 480-residue chain is Glutamate--tRNA ligase (480 aa).

Residues 21–31 (PSPTGYLHVGG) carry the 'HIGH' region motif. Positions 110, 112, 137, and 139 each coordinate Zn(2+). A 'KMSKS' region motif is present at residues 248 to 252 (KLSKR). Lys251 is a binding site for ATP.

The protein belongs to the class-I aminoacyl-tRNA synthetase family. Glutamate--tRNA ligase type 1 subfamily. Monomer. The cofactor is Zn(2+).

The protein localises to the cytoplasm. The enzyme catalyses tRNA(Glu) + L-glutamate + ATP = L-glutamyl-tRNA(Glu) + AMP + diphosphate. Its function is as follows. Catalyzes the attachment of glutamate to tRNA(Glu) in a two-step reaction: glutamate is first activated by ATP to form Glu-AMP and then transferred to the acceptor end of tRNA(Glu). This chain is Glutamate--tRNA ligase, found in Histophilus somni (strain 129Pt) (Haemophilus somnus).